The primary structure comprises 921 residues: Protein translocase subunit SecA (921 aa).

ATP contacts are provided by residues Q87, 105 to 109, and D501; that span reads GEGKT. The segment at 831-886 is disordered; it reads PFPVINTETSGPSEEPAGLFSQGTTGGDIPAPQPMAGFPSAAPMPPRPQPVPTGAE. Positions 872–881 are enriched in pro residues; the sequence is APMPPRPQPV. C905, C907, C916, and H917 together coordinate Zn(2+).

The protein belongs to the SecA family. Monomer and homodimer. Part of the essential Sec protein translocation apparatus which comprises SecA, SecYEG and auxiliary proteins SecDF-YajC and YidC. It depends on Zn(2+) as a cofactor.

It localises to the cell inner membrane. Its subcellular location is the cytoplasm. The enzyme catalyses ATP + H2O + cellular proteinSide 1 = ADP + phosphate + cellular proteinSide 2.. Part of the Sec protein translocase complex. Interacts with the SecYEG preprotein conducting channel. Has a central role in coupling the hydrolysis of ATP to the transfer of proteins into and across the cell membrane, serving both as a receptor for the preprotein-SecB complex and as an ATP-driven molecular motor driving the stepwise translocation of polypeptide chains across the membrane. This Gluconobacter oxydans (strain 621H) (Gluconobacter suboxydans) protein is Protein translocase subunit SecA.